We begin with the raw amino-acid sequence, 474 residues long: Mitogen-activated protein kinase pmk-3 (474 aa).

Positions 1 to 13 are enriched in low complexity; the sequence is MASVPSSSSLPVS. A disordered region spans residues 1–90; it reads MASVPSSSSL…EEEEDILSKP (90 aa). The segment covering 30–48 has biased composition (polar residues); the sequence is KRSNNQSQPPESYEPNTWL. A compositionally biased stretch (basic and acidic residues) spans 52 to 69; sequence REQEQQKKLAAENIKKQS. A Protein kinase domain is found at 114–419; that stretch reads YDVEPNSIEY…VEEAIQHPYL (306 aa). Residues 124-132 and Lys150 contribute to the ATP site; that span reads LGGGSFGNV. Residue Asp252 is the Proton acceptor of the active site. Residue Thr285 is modified to Phosphothreonine. A TXY motif is present at residues 285–287; it reads TQY. Tyr287 is modified (phosphotyrosine).

This sequence belongs to the protein kinase superfamily. CMGC Ser/Thr protein kinase family. MAP kinase subfamily. In terms of assembly, interacts with mak-2. May interact with vhp-1. May interact with uev-3. The cofactor is Mg(2+). Dually phosphorylated on Thr-285 and Tyr-287, which activates the enzyme. In terms of tissue distribution, expressed throughout the intestine.

It is found in the nucleus. Its subcellular location is the cytoplasm. It localises to the cell projection. The protein localises to the axon. The protein resides in the dendrite. It is found in the cilium. It carries out the reaction L-seryl-[protein] + ATP = O-phospho-L-seryl-[protein] + ADP + H(+). The catalysed reaction is L-threonyl-[protein] + ATP = O-phospho-L-threonyl-[protein] + ADP + H(+). Activated by phosphorylation on threonine and tyrosine. In terms of biological role, responds to activation by environmental stress and pro-inflammatory cytokines by phosphorylating downstream targets. Involved in axon regeneration after injury, probably downstream of dlk-1 and mkk-4 and upstream of mak-2. May phosphorylate mak-2. Plays a role in cilium length regulation, possibly by reducing rab-5 mediated endocytosis. Plays a role in the formation of muscle connections, also called muscle arm extensions, between the body wall and the motor axons in the dorsal and ventral cord. This Caenorhabditis elegans protein is Mitogen-activated protein kinase pmk-3 (pmk-3).